We begin with the raw amino-acid sequence, 571 residues long: Germacrene B synthase TPS16CC (571 aa).

(2E,6E)-farnesyl diphosphate contacts are provided by arginine 287, aspartate 324, aspartate 328, arginine 465, and aspartate 468. Residues aspartate 324 and aspartate 328 each contribute to the Mg(2+) site. Residues 324–328 (DDIYD) carry the DDXXD motif motif. The Mg(2+) site is built by aspartate 468, serine 472, and glutamate 476.

This sequence belongs to the terpene synthase family. Tpsb subfamily. It depends on Mg(2+) as a cofactor. Requires Mn(2+) as cofactor. As to expression, highly expressed in glandular trichomes.

It catalyses the reaction (2E,6E)-farnesyl diphosphate = (1E,4E)-germacrene B + diphosphate. It functions in the pathway secondary metabolite biosynthesis; terpenoid biosynthesis. Involved in sesquiterpene olefins biosynthesis, constituants of cannabinoids and terpenoids-rich resins. Catalyzes mainly the conversion of (2E)-farnesyl diphosphate to germacrene B, which is spontaneously converted to gamma-elemene as a thermal degradation product. The polypeptide is Germacrene B synthase TPS16CC (Cannabis sativa (Hemp)).